We begin with the raw amino-acid sequence, 372 residues long: Protein phosphatase 1 regulatory subunit 42 (372 aa).

7 LRR repeats span residues 30 to 51 (RITHLNFSNKNIDEVEDLTMCR), 52 to 71 (NLTVLYLYDNNINQIKNLGS), 72 to 93 (NLTHLYLQNNCISCIENLSGLK), 94 to 115 (RLEKLYLGGNCLTVVEGLEGLR), 116 to 137 (ELRELHIENQRLPPGEKLLFDP), 146 to 167 (SLSVLNISNNNIDELKDLAVLE), and 168 to 189 (NLTQFVAADNQLKEIKDLEFVL). Positions 203–241 (NPVCLKPKYREKVTIISKTLEILDGKEIKEMARQFLLNW) constitute an LRRCT domain.

It localises to the cytoplasm. Its subcellular location is the cytoskeleton. The protein resides in the microtubule organizing center. It is found in the centrosome. Its function is as follows. May regulate phosphatase activity of protein phosphatase 1 (PP1) complexes. The sequence is that of Protein phosphatase 1 regulatory subunit 42 (ppp1r42) from Xenopus laevis (African clawed frog).